A 201-amino-acid chain; its full sequence is Translation initiation factor IF-3 (201 aa).

Belongs to the IF-3 family. Monomer.

Its subcellular location is the cytoplasm. Its function is as follows. IF-3 binds to the 30S ribosomal subunit and shifts the equilibrium between 70S ribosomes and their 50S and 30S subunits in favor of the free subunits, thus enhancing the availability of 30S subunits on which protein synthesis initiation begins. This Mycoplasma pneumoniae (strain ATCC 29342 / M129 / Subtype 1) (Mycoplasmoides pneumoniae) protein is Translation initiation factor IF-3.